The primary structure comprises 178 residues: Protein FLOWERING LOCUS T 1 (178 aa).

Belongs to the phosphatidylethanolamine-binding protein family. In terms of tissue distribution, expressed in leaves but not in shoot apex.

Its function is as follows. Involved in the regulation of vernalization and of flowering time. This chain is Protein FLOWERING LOCUS T 1, found in Brachypodium distachyon (Purple false brome).